A 592-amino-acid polypeptide reads, in one-letter code: Methionine--tRNA ligase (592 aa).

A 'HIGH' region motif is present at residues 12–22 (PYANGPFHVGH). 4 residues coordinate Zn(2+): Cys-144, Cys-147, Cys-157, and Cys-160. A 'KMSKS' region motif is present at residues 342–346 (KMSTS). Thr-345 provides a ligand contact to ATP.

This sequence belongs to the class-I aminoacyl-tRNA synthetase family. MetG type 1 subfamily. As to quaternary structure, monomer. Zn(2+) serves as cofactor.

The protein localises to the cytoplasm. The catalysed reaction is tRNA(Met) + L-methionine + ATP = L-methionyl-tRNA(Met) + AMP + diphosphate. In terms of biological role, is required not only for elongation of protein synthesis but also for the initiation of all mRNA translation through initiator tRNA(fMet) aminoacylation. The protein is Methionine--tRNA ligase of Roseiflexus castenholzii (strain DSM 13941 / HLO8).